A 283-amino-acid polypeptide reads, in one-letter code: Polyamine aminopropyltransferase (283 aa).

Residues Gln5 to Ser238 form the PABS domain. Gln32 is a binding site for S-methyl-5'-thioadenosine. The spermidine site is built by His63 and Asp87. S-methyl-5'-thioadenosine is bound by residues Glu107 and Asp139–Gly140. Asp158 (proton acceptor) is an active-site residue. Asp158–Asp161 serves as a coordination point for spermidine.

Belongs to the spermidine/spermine synthase family. As to quaternary structure, homodimer or homotetramer.

It localises to the cytoplasm. The enzyme catalyses S-adenosyl 3-(methylsulfanyl)propylamine + putrescine = S-methyl-5'-thioadenosine + spermidine + H(+). Its pathway is amine and polyamine biosynthesis; spermidine biosynthesis; spermidine from putrescine: step 1/1. In terms of biological role, catalyzes the irreversible transfer of a propylamine group from the amino donor S-adenosylmethioninamine (decarboxy-AdoMet) to putrescine (1,4-diaminobutane) to yield spermidine. The protein is Polyamine aminopropyltransferase of Prochlorococcus marinus (strain MIT 9301).